We begin with the raw amino-acid sequence, 156 residues long: Small ribosomal subunit protein uS7 (156 aa).

This sequence belongs to the universal ribosomal protein uS7 family. In terms of assembly, part of the 30S ribosomal subunit. Contacts proteins S9 and S11.

One of the primary rRNA binding proteins, it binds directly to 16S rRNA where it nucleates assembly of the head domain of the 30S subunit. Is located at the subunit interface close to the decoding center, probably blocks exit of the E-site tRNA. The polypeptide is Small ribosomal subunit protein uS7 (Chlorobaculum parvum (strain DSM 263 / NCIMB 8327) (Chlorobium vibrioforme subsp. thiosulfatophilum)).